The sequence spans 263 residues: Glutamate racemase (263 aa).

Residues 12–13 (DS) and 44–45 (YG) each bind substrate. Cys-75 functions as the Proton donor/acceptor in the catalytic mechanism. Substrate is bound at residue 76 to 77 (NT). Cys-186 (proton donor/acceptor) is an active-site residue. 187–188 (TH) contributes to the substrate binding site.

The protein belongs to the aspartate/glutamate racemases family.

It carries out the reaction L-glutamate = D-glutamate. It participates in cell wall biogenesis; peptidoglycan biosynthesis. In terms of biological role, provides the (R)-glutamate required for cell wall biosynthesis. The polypeptide is Glutamate racemase (Ectopseudomonas mendocina (strain ymp) (Pseudomonas mendocina)).